A 943-amino-acid chain; its full sequence is MTDYKATLNLPSTAFPMKAGLPQREPEILQRWNSIDLYRKLRQIGEGRPKFILHDGPPYANGNIHIGHAVNKVIKDMIVRSRTLAGFDAPYVPGWDCHGLPIEHKVETTFGKNQPADLTRERCRAYAAEQIEGQKADFIRLGVLGDWDNPYKTMDFANEAGEIRALAKMVEGGFVFKGLKPVNWCFDCGSALAEAEVEYQDKKSDAIDVAFDVEDADKLAAAFGLASLAKRASIVIWTTTPWTIPANQALNVHPEFVYALVDTGERLLVLAEELVESCLQRYGLAGEIIARCEGKALELIRFRHPFYERFAPVYLADYVETGAGTGIVHSAPAYGEDDFRSCKHYGMENDDILGPVQSNGVYVSDLPFFGGQFIWKANPAIVEKLAEVGALLKHESIQHSYMHCWRHKTPLIYRATAQWFVGMDKVAHDGSSLRRRALDAIEQTEFVPAWGQARLHGMIAGRPDWCISRQRTWGVPIPFFLHKESGELHPRTVELMEQVAQRVEQGGIEAWSKLDAAELLGDEAAQYEKITDTLDVWFDSGTTHWHVMRGSHPMGHEQGPRADLYLEGSDQHRGWFHSSLLTGAAIDGHAPYKGLLTHGFTVDENGRKMSKSLGNVIAPQEITDSMGADILRLWVSATDYSGEMAVSKQILQRSADAYRRIRNTARFLLSNLDGFDPAQHMAPNDQLIALDRWAIDRALLLQREIEEAYTTYKFWNVYQKVHNFCVQELGGFYLDIIKDRQYTTGADSLPRRSCQTALYHIAEALVRWIAPILAFTAEEIWQYLPGERNESVMLNTWYEGLAELPEGFELGRPFWDKVMEVKAAVNKELENQRNAKAIGGNLQAEVTLYAEESLAGELARLGSELRFVLITSAVDIAPLAQAPAEAVDSELAGLKLLVRKTEHSKCGRCWHHLPDVGSHAEHPEICGRCVENIEGAGEVRHYA.

Residues 58–68 (PYANGNIHIGH) carry the 'HIGH' region motif. Residue Glu567 coordinates L-isoleucyl-5'-AMP. The short motif at 608–612 (KMSKS) is the 'KMSKS' region element. Lys611 is an ATP binding site. The Zn(2+) site is built by Cys906, Cys909, Cys926, and Cys929.

Belongs to the class-I aminoacyl-tRNA synthetase family. IleS type 1 subfamily. As to quaternary structure, monomer. Zn(2+) serves as cofactor.

The protein localises to the cytoplasm. It carries out the reaction tRNA(Ile) + L-isoleucine + ATP = L-isoleucyl-tRNA(Ile) + AMP + diphosphate. In terms of biological role, catalyzes the attachment of isoleucine to tRNA(Ile). As IleRS can inadvertently accommodate and process structurally similar amino acids such as valine, to avoid such errors it has two additional distinct tRNA(Ile)-dependent editing activities. One activity is designated as 'pretransfer' editing and involves the hydrolysis of activated Val-AMP. The other activity is designated 'posttransfer' editing and involves deacylation of mischarged Val-tRNA(Ile). This Stutzerimonas stutzeri (strain A1501) (Pseudomonas stutzeri) protein is Isoleucine--tRNA ligase.